The primary structure comprises 1003 residues: Calcium-transporting ATPase sarcoplasmic/endoplasmic reticulum type (1003 aa).

Residues 1–59 are Cytoplasmic-facing; that stretch reads MEDAHAKKWEEVVDYFGVDPERGLALEQVKKNQEKYGPNELPAEEGKSLLTLILEQFDD. The helical transmembrane segment at 60-78 threads the bilayer; sequence LLVKILLLAAIISLVLALF. The Extracellular portion of the chain corresponds to 79–89; that stretch reads EEHDDEAEQLT. Residues 90-110 traverse the membrane as a helical segment; it reads AYVEPFVILLILIANAVVGVW. Over 111 to 262 the chain is Cytoplasmic; that stretch reads QEKNAESAIE…QQKLDEFGEQ (152 aa). Residues 263 to 282 form a helical membrane-spanning segment; it reads LSKVISVICVAVWAINIGHF. The Extracellular segment spans residues 283-300; sequence NDPAHGGSWIKGAIYYFK. The helical transmembrane segment at 301 to 318 threads the bilayer; that stretch reads IAVALAVAAIPEGLPAVI. Over 319–775 the chain is Cytoplasmic; it reads TTCLALGTRR…RYLISSNIGE (457 aa). D354 (4-aspartylphosphate intermediate) is an active-site residue. K519 provides a ligand contact to ATP. A helical membrane pass occupies residues 776-799; sequence VVSIFLTAALGLPEALIPVQLLWV. Over 800-840 the chain is Extracellular; the sequence is NLVTDGLPATALGFNPPDLDIMNKPPRRADEGLITGWLFFR. A helical transmembrane segment spans residues 841 to 863; sequence YMAIGTYVGAATVGAAAHWFMMS. At 864 to 898 the chain is on the cytoplasmic side; it reads PTGPGLNFYQLSHHLQCTPENEYFEGIDCEIFSDP. A helical transmembrane segment spans residues 899-917; it reads HPMTMALSVLVTIEMLNAI. Over 918-934 the chain is Extracellular; that stretch reads NSLSENQSLLVMPPWSN. Residues 935–954 form a helical membrane-spanning segment; sequence IWLISAICLSMTLHFVILYV. At 955–1003 the chain is on the cytoplasmic side; that stretch reads EILSTVFQICPLTLTEWIVVLKISFPVLLLDEVLKFVARKYTDEFSFIK.

This sequence belongs to the cation transport ATPase (P-type) (TC 3.A.3) family.

The protein localises to the sarcoplasmic reticulum membrane. The enzyme catalyses Ca(2+)(in) + ATP + H2O = Ca(2+)(out) + ADP + phosphate + H(+). Functionally, this magnesium-dependent enzyme catalyzes the hydrolysis of ATP coupled with the transport of the calcium. This is Calcium-transporting ATPase sarcoplasmic/endoplasmic reticulum type from Artemia franciscana (Brine shrimp).